The chain runs to 251 residues: MDGDSFQQWKNQCLNKCDFSKKGSVDEDISHVVSFINSQDRYFTTSSCSGRIILFDAVSDCPDVQKQNCSWLFVTHQKCQMEDVVRGLEKSVGDATFKFEPFVLHVQCKQLEDAQLLHTVAINSGFRNSGITVGKKGKIIMAVRSTHCLEVPLSHRSHVLVTHQYLDFLVGVANQKMEENLKRIQRFSECLQAALQPQEEKCSFKEADNKTVYRRRRKRTQDVSVTDSSQNTQEHHENTEEEIDCDLLFLL.

Positions 213–240 (YRRRRKRTQDVSVTDSSQNTQEHHENTE) are disordered.

It belongs to the TYW3 family.

It carries out the reaction 4-demethyl-7-[(3S)-3-amino-3-carboxypropyl]wyosine(37) in tRNA(Phe) + S-adenosyl-L-methionine = 7-[(3S)-3-amino-3-carboxypropyl]wyosine(37) in tRNA(Phe) + S-adenosyl-L-homocysteine + H(+). Its pathway is tRNA modification; wybutosine-tRNA(Phe) biosynthesis. Its function is as follows. Probable S-adenosyl-L-methionine-dependent methyltransferase that acts as a component of the wybutosine biosynthesis pathway. Wybutosine is a hyper modified guanosine with a tricyclic base found at the 3'-position adjacent to the anticodon of eukaryotic phenylalanine tRNA. The protein is tRNA wybutosine-synthesizing protein 3 homolog (tyw3) of Danio rerio (Zebrafish).